The following is a 96-amino-acid chain: Ribonuclease P protein component 1 (96 aa).

The protein belongs to the eukaryotic/archaeal RNase P protein component 1 family. In terms of assembly, consists of a catalytic RNA component and at least 4-5 protein subunits.

It is found in the cytoplasm. The enzyme catalyses Endonucleolytic cleavage of RNA, removing 5'-extranucleotides from tRNA precursor.. Functionally, part of ribonuclease P, a protein complex that generates mature tRNA molecules by cleaving their 5'-ends. The sequence is that of Ribonuclease P protein component 1 from Methanococcus aeolicus (strain ATCC BAA-1280 / DSM 17508 / OCM 812 / Nankai-3).